The following is a 776-amino-acid chain: G protein-regulated inducer of neurite outgrowth 3 (776 aa).

2 disordered regions span residues 1–37 and 68–312; these read MGTV…RHRP and VCEH…IKEV. A compositionally biased stretch (low complexity) spans 101-118; sequence QLPGSSQPAASAPSSAAG. Polar residues-rich tracts occupy residues 129–161 and 193–203; these read PANQ…SQRT and ETIQGTVQTPV. A compositionally biased stretch (low complexity) spans 208 to 217; that stretch reads VVSHSSSPVG. Residues 242 to 274 are compositionally biased toward polar residues; it reads SGCSENKQPSVTASGPQGTTSVTPQPTPLTSEP. S332 and S365 each carry phosphoserine. 2 disordered regions span residues 518–637 and 723–748; these read ISKA…RPSR and LIKT…LRGR. Over residues 520 to 552 the composition is skewed to basic and acidic residues; it reads KADHSGSLDPTNKGDAREKKPASPQVVKEKEST. Residues 566-580 show a composition bias toward polar residues; it reads PKSQESGGTESAANP. Residues 604–620 are compositionally biased toward low complexity; that stretch reads SLSLPSDPMGDSSPGSG. The span at 725 to 742 shows a compositional bias: polar residues; that stretch reads KTQNSQTRRSISSDTSSN.

Functionally, may be involved in neurite outgrowth. The sequence is that of G protein-regulated inducer of neurite outgrowth 3 (GPRIN3) from Homo sapiens (Human).